The chain runs to 433 residues: Zinc finger and SCAN domain-containing protein 4 (433 aa).

An SCAN box domain is found at 44-126 (RMVLNSFQDS…RFIEDLTDDS (83 aa)). Polar residues-rich tracts occupy residues 165 to 185 (TTRE…SLET), 195 to 210 (GWNS…ENIT), and 277 to 299 (QPEQ…STCE). Disordered regions lie at residues 165-210 (TTRE…ENIT) and 275-301 (ISQP…CEVH). 4 C2H2-type zinc fingers span residues 312-334 (YKCE…QRRH), 340-362 (FVCP…QIIH), 368-390 (FTCS…ERIH), and 396-418 (YTCP…MRTH).

Its subcellular location is the nucleus. The protein resides in the chromosome. It is found in the telomere. Embryonic stem (ES) cell-specific transcription factor required to regulate ES cell pluripotency. Binds telomeres and plays a key role in genomic stability in ES cells by regulating telomere elongation. Acts as an activator of spontaneous telomere sister chromatid exchange (T-SCE) and telomere elongation in undifferentiated ES cells. The sequence is that of Zinc finger and SCAN domain-containing protein 4 (ZSCAN4) from Homo sapiens (Human).